The chain runs to 80 residues: Keratin-associated protein 6-1 (80 aa).

Belongs to the KRTAP type 6 family. Interacts with hair keratins.

In terms of biological role, in the hair cortex, hair keratin intermediate filaments are embedded in an interfilamentous matrix, consisting of hair keratin-associated proteins (KRTAP), which are essential for the formation of a rigid and resistant hair shaft through their extensive disulfide bond cross-linking with abundant cysteine residues of hair keratins. The matrix proteins include the high-sulfur and high-glycine-tyrosine keratins. This Oryctolagus cuniculus (Rabbit) protein is Keratin-associated protein 6-1 (KRTAP6-1).